A 382-amino-acid polypeptide reads, in one-letter code: Galactokinase (382 aa).

A substrate-binding site is contributed by 34–37 (EHTD). Residue 124 to 130 (GAGLSSS) participates in ATP binding. Positions 130 and 162 each coordinate Mg(2+). Asp-174 serves as the catalytic Proton acceptor. A substrate-binding site is contributed by Tyr-223.

The protein belongs to the GHMP kinase family. GalK subfamily.

Its subcellular location is the cytoplasm. The enzyme catalyses alpha-D-galactose + ATP = alpha-D-galactose 1-phosphate + ADP + H(+). Its pathway is carbohydrate metabolism; galactose metabolism. Catalyzes the transfer of the gamma-phosphate of ATP to D-galactose to form alpha-D-galactose-1-phosphate (Gal-1-P). This is Galactokinase from Escherichia coli O127:H6 (strain E2348/69 / EPEC).